A 222-amino-acid chain; its full sequence is Putative serine proteinase inhibitor 2 homolog second part (222 aa).

Belongs to the serpin family. Poxviruses subfamily.

In Homo sapiens (Human), this protein is Putative serine proteinase inhibitor 2 homolog second part.